Here is a 274-residue protein sequence, read N- to C-terminus: Shikimate kinase (274 aa).

An ATP-binding site is contributed by 86–96; the sequence is PVGKGLKSSSA.

It belongs to the GHMP kinase family. Archaeal shikimate kinase subfamily.

The protein localises to the cytoplasm. It catalyses the reaction shikimate + ATP = 3-phosphoshikimate + ADP + H(+). It participates in metabolic intermediate biosynthesis; chorismate biosynthesis; chorismate from D-erythrose 4-phosphate and phosphoenolpyruvate: step 5/7. This Pyrococcus abyssi (strain GE5 / Orsay) protein is Shikimate kinase (aroK).